The chain runs to 116 residues: Large ribosomal subunit protein bL17 (116 aa).

Belongs to the bacterial ribosomal protein bL17 family. Part of the 50S ribosomal subunit. Contacts protein L32.

This is Large ribosomal subunit protein bL17 from Synechococcus sp. (strain WH7803).